Here is a 332-residue protein sequence, read N- to C-terminus: Cell growth regulator with RING finger domain protein 1 (332 aa).

The segment at 274–309 (CVVCQNGGVNWVLLPCRHACLCDSCVRYFKQCPMCR) adopts an RING-type zinc-finger fold.

Its subcellular location is the nucleus. It localises to the endoplasmic reticulum. Its function is as follows. Able to inhibit growth in several cell lines. In Mus musculus (Mouse), this protein is Cell growth regulator with RING finger domain protein 1 (Cgrrf1).